Reading from the N-terminus, the 436-residue chain is ATP-dependent protease ATPase subunit HslU (436 aa).

Residues isoleucine 19, 61–65, aspartate 249, glutamate 314, and arginine 386 each bind ATP; that span reads GVGKT.

Belongs to the ClpX chaperone family. HslU subfamily. A double ring-shaped homohexamer of HslV is capped on each side by a ring-shaped HslU homohexamer. The assembly of the HslU/HslV complex is dependent on binding of ATP.

It localises to the cytoplasm. Functionally, ATPase subunit of a proteasome-like degradation complex; this subunit has chaperone activity. The binding of ATP and its subsequent hydrolysis by HslU are essential for unfolding of protein substrates subsequently hydrolyzed by HslV. HslU recognizes the N-terminal part of its protein substrates and unfolds these before they are guided to HslV for hydrolysis. The sequence is that of ATP-dependent protease ATPase subunit HslU from Bartonella tribocorum (strain CIP 105476 / IBS 506).